The sequence spans 348 residues: N-formyl peptide receptor 2 (348 aa).

N-linked (GlcNAc...) asparagine glycosylation is present at N1. Residues 1–24 (NFSTPLNEHEEVSYESAGYTVLRI) are Extracellular-facing. Residues 25–47 (LPLVVLGVTFVLGVLGNGLVIWV) traverse the membrane as a helical segment. Topologically, residues 48–58 (AGFRMTRTVTT) are cytoplasmic. The helical transmembrane segment at 59–80 (ICYLNLALADFSFTATLPFLIV) threads the bilayer. The Extracellular segment spans residues 81 to 97 (SMAMGEKWPFGWFLCKL). Cysteines 95 and 173 form a disulfide. A helical membrane pass occupies residues 98 to 118 (IHIVVDINLFGSVFLIGFIAL). Over 119–137 (DRCICVLHPVWAQNHRTVS) the chain is Cytoplasmic. The helical transmembrane segment at 138-159 (LAMKVIVGPWILALVLTLPVFL) threads the bilayer. Over 160–202 (FLTTVTIPNGDTYCTFNFASWGGTPEERQKVAITMLTARGIIR) the chain is Extracellular. The chain crosses the membrane as a helical span at residues 203 to 223 (FVIGFSLPMSIVAICYGLIAA). Residues 224–239 (KIHKKGMIKSSRPLRV) lie on the Cytoplasmic side of the membrane. Residues 240–263 (LTAVVASFFICWFPFQLVALLGTV) traverse the membrane as a helical segment. The Extracellular portion of the chain corresponds to 264–283 (WLKEMLFYGKYKIIDILVNP). A helical membrane pass occupies residues 284 to 303 (TSSLAFFNSCLNPMLYVFVG). At 304 to 348 (QDFRERLIHSLPTSLERALSEDSAPTNDTAASCASPPAETELQAM) the chain is on the cytoplasmic side. The segment at 323–348 (SEDSAPTNDTAASCASPPAETELQAM) is disordered. Residues 326–335 (SAPTNDTAAS) show a composition bias toward polar residues.

The protein belongs to the G-protein coupled receptor 1 family. In terms of assembly, interacts with APP; the interaction takes place at the cell surface and the complex is then rapidly internalized.

The protein resides in the cell membrane. In terms of biological role, low affinity receptor for N-formyl-methionyl peptides, which are powerful neutrophil chemotactic factors. Binding of FMLP to the receptor causes activation of neutrophils. This response is mediated via a G-protein that activates a phosphatidylinositol-calcium second messenger system. Receptor for the chemokine-like protein FAM19A5, mediating FAM19A5-stimulated macrophage chemotaxis and the inhibitory effect on TNFSF11/RANKL-induced osteoclast differentiation. In Gorilla gorilla gorilla (Western lowland gorilla), this protein is N-formyl peptide receptor 2 (FPR2).